Consider the following 130-residue polypeptide: RutC family protein in leuC 5'region (130 aa).

The protein belongs to the RutC family.

This chain is RutC family protein in leuC 5'region, found in Leuconostoc mesenteroides subsp. cremoris.